The following is a 460-amino-acid chain: Centrosomal protein CEP57L1 (460 aa).

Phosphoserine is present on S49. Coiled coils occupy residues 51–228 (NSQA…EISK) and 317–384 (ISIC…LKKH). Positions 399 to 410 (KMSEASGIQQED) are enriched in polar residues. A disordered region spans residues 399-423 (KMSEASGIQQEDSYPKGSKNIKNSP).

It belongs to the translokin family.

The protein localises to the cytoplasm. The protein resides in the cytoskeleton. Its subcellular location is the microtubule organizing center. It is found in the centrosome. Centrosomal protein which may be required for microtubule attachment to centrosomes. This Homo sapiens (Human) protein is Centrosomal protein CEP57L1 (CEP57L1).